The primary structure comprises 128 residues: Global transcriptional regulator Spx 1 (128 aa).

Residues cysteine 10 and cysteine 13 are joined by a disulfide bond.

It belongs to the ArsC family. Spx subfamily. As to quaternary structure, interacts with the C-terminal domain of the alpha subunit of the RNAP.

It localises to the cytoplasm. Its function is as follows. Global transcriptional regulator that plays a key role in stress response and exerts either positive or negative regulation of genes. Acts by interacting with the C-terminal domain of the alpha subunit of the RNA polymerase (RNAP). This interaction can enhance binding of RNAP to the promoter region of target genes and stimulate their transcription, or block interaction of RNAP with activator. This chain is Global transcriptional regulator Spx 1, found in Lactococcus lactis subsp. lactis (strain IL1403) (Streptococcus lactis).